Consider the following 363-residue polypeptide: Flagellar P-ring protein (363 aa).

An N-terminal signal peptide occupies residues 1–20; sequence MKIKVLLAVALLAMTVPVKA.

The protein belongs to the FlgI family. In terms of assembly, the basal body constitutes a major portion of the flagellar organelle and consists of four rings (L,P,S, and M) mounted on a central rod.

It localises to the periplasm. The protein localises to the bacterial flagellum basal body. In terms of biological role, assembles around the rod to form the L-ring and probably protects the motor/basal body from shearing forces during rotation. This chain is Flagellar P-ring protein, found in Shewanella amazonensis (strain ATCC BAA-1098 / SB2B).